Here is a 588-residue protein sequence, read N- to C-terminus: Aspartate--tRNA ligase (588 aa).

L-aspartate is bound at residue glutamate 172. Positions 196–199 (QLFK) are aspartate. Position 218 (arginine 218) interacts with L-aspartate. ATP is bound by residues 218–220 (RDE) and glutamine 227. L-aspartate is bound at residue histidine 449. Residue glutamate 483 coordinates ATP. Arginine 490 provides a ligand contact to L-aspartate. 535 to 538 (GLDR) provides a ligand contact to ATP.

It belongs to the class-II aminoacyl-tRNA synthetase family. Type 1 subfamily. In terms of assembly, homodimer.

Its subcellular location is the cytoplasm. It catalyses the reaction tRNA(Asp) + L-aspartate + ATP = L-aspartyl-tRNA(Asp) + AMP + diphosphate. Catalyzes the attachment of L-aspartate to tRNA(Asp) in a two-step reaction: L-aspartate is first activated by ATP to form Asp-AMP and then transferred to the acceptor end of tRNA(Asp). The sequence is that of Aspartate--tRNA ligase from Histophilus somni (strain 2336) (Haemophilus somnus).